A 107-amino-acid chain; its full sequence is uncharacterized protein (107 aa).

One can recognise an HTH cro/C1-type domain in the interval 13–68 (LQEEFLEPLSLKISDLAQILDVHRNTASNIVNNSSRITLEMAVKLAKVFDTTPEFW). The H-T-H motif DNA-binding region spans 24 to 43 (KISDLAQILDVHRNTASNIV).

It belongs to the VapA/VapI family.

This is an uncharacterized protein from Haemophilus influenzae (strain ATCC 51907 / DSM 11121 / KW20 / Rd).